The primary structure comprises 200 residues: DNA dC-&gt;dU-editing enzyme APOBEC-3H (200 aa).

One can recognise a CMP/dCMP-type deaminase domain in the interval 4–126; sequence LTAETFRLQF…KPQQKGLRLL (123 aa). Zn(2+) is bound at residue histidine 54. Glutamate 56 functions as the Proton donor in the catalytic mechanism. 2 residues coordinate Zn(2+): cysteine 85 and cysteine 88. Residues 160–182 adopt a coiled-coil conformation; the sequence is YKMLEELDKNSRAIKRRLERIKI.

It belongs to the cytidine and deoxycytidylate deaminase family. Homodimer. Interacts with AGO1, AGO2 and AGO3. Zn(2+) is required as a cofactor. Post-translationally, (Microbial infection) Following infection by some HIV-1 strains, such as isolate BRU/LAI, can be ubiquitinated by a cullin-5-RING E3 ubiquitin-protein ligase complex (ECS complex) hijacked by the HIV-1 Vif protein, leading to its degradation. Ubiquitination by the ECS complex is however less efficent compared to APOBEC3G or APOBEC3G. In terms of tissue distribution, expressed in lymphoid organs. Also detected in non-lymphoid tissues including lung, testis, ovary, fetal liver and skin.

The protein localises to the cytoplasm. It localises to the nucleus. The protein resides in the P-body. It catalyses the reaction a 2'-deoxycytidine in single-stranded DNA + H2O + H(+) = a 2'-deoxyuridine in single-stranded DNA + NH4(+). APOBEC3H activity is regulated by RNA. While RNA-binding inhibits the DNA deaminase activity, double-stranded RNA is required for HIV-1 restriction by promoting APOBEC3H homodimerization and packaging into retroviral nucleocapsids. Its activity is regulated as follows. (Microbial infection) Antiviral activity is inhibited to some extent by the HIV-1 virion infectivity factor (VIF), that prevents its incorporation into progeny virions by both inhibiting its translation and/or by inducing its ubiquitination and subsequent degradation by the 26S proteasome. In terms of biological role, DNA deaminase (cytidine deaminase) which acts as an inhibitor of retrovirus replication and retrotransposon mobility via deaminase-dependent and -independent mechanisms. The A3H-var/haplotype 2 exhibits antiviral activity against vif-deficient HIV-1. After the penetration of retroviral nucleocapsids into target cells of infection and the initiation of reverse transcription, it can induce the conversion of cytosine to uracil in the minus-sense single-strand viral DNA, leading to G-to-A hypermutations in the subsequent plus-strand viral DNA. The resultant detrimental levels of mutations in the proviral genome, along with a deamination-independent mechanism that works prior to the proviral integration, together exert efficient antiretroviral effects in infected target cells. Selectively targets single-stranded DNA and does not deaminate double-stranded DNA or single- or double-stranded RNA. Exhibits antiviral activity also against T-cell leukemia virus type 1 (HTLV-1) and may inhibit the mobility of LTR and non-LTR retrotransposons. This is DNA dC-&gt;dU-editing enzyme APOBEC-3H from Homo sapiens (Human).